The chain runs to 402 residues: NADH-quinone oxidoreductase subunit D (402 aa).

This sequence belongs to the complex I 49 kDa subunit family. In terms of assembly, NDH-1 is composed of 14 different subunits. Subunits NuoB, C, D, E, F, and G constitute the peripheral sector of the complex.

The protein localises to the cell inner membrane. The enzyme catalyses a quinone + NADH + 5 H(+)(in) = a quinol + NAD(+) + 4 H(+)(out). Functionally, NDH-1 shuttles electrons from NADH, via FMN and iron-sulfur (Fe-S) centers, to quinones in the respiratory chain. The immediate electron acceptor for the enzyme in this species is believed to be ubiquinone. Couples the redox reaction to proton translocation (for every two electrons transferred, four hydrogen ions are translocated across the cytoplasmic membrane), and thus conserves the redox energy in a proton gradient. The protein is NADH-quinone oxidoreductase subunit D of Rhodopseudomonas palustris (strain ATCC BAA-98 / CGA009).